The following is a 273-amino-acid chain: Large ribosomal subunit protein uL2 (273 aa).

Residues V228 to K273 form a disordered region. Residues K254–K273 are compositionally biased toward basic residues.

It belongs to the universal ribosomal protein uL2 family. In terms of assembly, part of the 50S ribosomal subunit. Forms a bridge to the 30S subunit in the 70S ribosome.

One of the primary rRNA binding proteins. Required for association of the 30S and 50S subunits to form the 70S ribosome, for tRNA binding and peptide bond formation. It has been suggested to have peptidyltransferase activity; this is somewhat controversial. Makes several contacts with the 16S rRNA in the 70S ribosome. This is Large ribosomal subunit protein uL2 from Rickettsia massiliae (strain Mtu5).